The chain runs to 199 residues: Recombination protein RecR (199 aa).

The C4-type zinc-finger motif lies at 58 to 73 (CSVCTNLTDRDPCRIC). The Toprim domain occupies 81 to 176 (AVICVVEEPR…KVTRIAHGLP (96 aa)).

The protein belongs to the RecR family.

Functionally, may play a role in DNA repair. It seems to be involved in an RecBC-independent recombinational process of DNA repair. It may act with RecF and RecO. The protein is Recombination protein RecR of Heliobacterium modesticaldum (strain ATCC 51547 / Ice1).